A 475-amino-acid chain; its full sequence is Equilibrative nucleoside transporter 3 (475 aa).

Over 1–51 (MAFASEDNVYHSSNAVYRAPSNHQEADQEALLGKLLDYPAPGLQRPEDRFN) the chain is Cytoplasmic. At S21 the chain carries Phosphoserine. Residues 31–32 (LL) carry the Dileucine internalization motif motif. The helical transmembrane segment at 52 to 72 (GAYIIFFCLGIGGLLPWNFFV) threads the bilayer. Residues 73–105 (TAKEYWAYKLRNCSSPASGEDPEDMDILNYFES) lie on the Extracellular side of the membrane. Residue N84 is glycosylated (N-linked (GlcNAc...) asparagine). Residues 106–126 (YLAVASTVPSLLFLVANFLLV) traverse the membrane as a helical segment. Topologically, residues 127-134 (NRVQVHVR) are cytoplasmic. The helical transmembrane segment at 135–155 (VLASLSVSLAIFVVMIVLVKV) threads the bilayer. Residues 156–162 (DTSSWTR) are Extracellular-facing. A helical membrane pass occupies residues 163–183 (GFFSLTIACMAIISSSSTIFN). Over 184-199 (SSVYGLTGSFPMRNAQ) the chain is Cytoplasmic. Residues 200 to 220 (ALISGGAMGGTVSAVALLVDL) traverse the membrane as a helical segment. At 221–230 (AASSDVRDST) the chain is on the extracellular side. The chain crosses the membrane as a helical span at residues 231–251 (LAFFLMAAVFLGLCMGLYLLL). Residues 252-305 (SQLEYARYYMRPVAPVRVFSGEDNPSQDAPSASSVAPASRVMHTPPLGPILKKT) lie on the Cytoplasmic side of the membrane. Residues 306-326 (ASLGFCAVSLYFVTAFIIPAI) form a helical membrane-spanning segment. Residues 327–340 (STNIQSMHKGTGSP) are Extracellular-facing. The chain crosses the membrane as a helical span at residues 341–361 (WTSKFFVPLTVFLLFNFADLC). The Cytoplasmic segment spans residues 362–377 (GRQVTAWIQVPGPRSK). The helical transmembrane segment at 378 to 398 (LLPGLVVSRFCLVPLFLLCNY) threads the bilayer. At 399-415 (QPRSHLTKVLFQSDIYP) the chain is on the extracellular side. The chain crosses the membrane as a helical span at residues 416-436 (VLFTCLLGLSNGYLSTLVLIY). Over 437–450 (GPKIVPRELAEATS) the chain is Cytoplasmic. A helical transmembrane segment spans residues 451–471 (VVMLFYMSVGLMLGSACAALL). Residues 472–475 (EHFI) are Extracellular-facing.

Belongs to the SLC29A/ENT transporter (TC 2.A.57) family. As to expression, expressed in macrophages.

It localises to the lysosome membrane. The protein resides in the late endosome membrane. It is found in the mitochondrion membrane. Its subcellular location is the cell membrane. It catalyses the reaction adenosine(in) = adenosine(out). The catalysed reaction is guanosine(in) = guanosine(out). It carries out the reaction inosine(in) = inosine(out). The enzyme catalyses uridine(out) = uridine(in). It catalyses the reaction cytidine(in) = cytidine(out). The catalysed reaction is thymidine(in) = thymidine(out). It carries out the reaction 2'-deoxyadenosine(in) = 2'-deoxyadenosine(out). The enzyme catalyses 2'-deoxycytidine(in) = 2'-deoxycytidine(out). It catalyses the reaction guanine(out) = guanine(in). The catalysed reaction is uracil(in) = uracil(out). It carries out the reaction (R)-noradrenaline(out) = (R)-noradrenaline(in). The enzyme catalyses dopamine(out) = dopamine(in). It catalyses the reaction serotonin(out) = serotonin(in). The catalysed reaction is tyramine(in) = tyramine(out). It carries out the reaction ATP(in) = ATP(out). In terms of biological role, uniporter that mediates the facilitative transport of nucleoside across lysosomal and mitochondrial membranes. Functions as a non-electrogenic Na(+)-independent transporter. Substrate transport is pH-dependent and enhanced under acidic condition, probably reflecting the location of the transporter in acidic intracellular compartments. Proton is not a cotransporting ion but most likely change the ionization state of the transporter which dictates transport-permissible/impermissible conformation for nucleoside translocation. May direct the nucleoside transport from lysosomes to cytosol or cytosol to mitochondria to facilitate the fundamental function of salvage synthesis of nucleic acids. Involved in the transport of nucleosides (adenosine, guanosine, uridine, thymidine, cytidine and inosine) and deoxynucleosides (deoxyadenosine, deoxycytidine). Also mediates transport of purine nucleobases (adenine, guanine), and pyrimidine nucleobases (uracil). Also able to transport monoamine neurotransmitters dopamine, serotonin, noradrenaline and tyramine. Capable of transporting ATP. Mediates nucleoside export from lysosomes in macrophages, which regulates macrophage functions and numbers. The polypeptide is Equilibrative nucleoside transporter 3 (Mus musculus (Mouse)).